Here is a 705-residue protein sequence, read N- to C-terminus: MHKDWTIDVAGGKMKFETGKYAKQANGSVVARYGDTTVLVTATMSEPREGIDYFPLMVNYEERVYAIGKIPGSITRREGRPRDVATLAARLIDRPLRPLFPEGFRHDVQIIATVLSVDNDCEPDILALNGASVALTLSDIPFDGPIGGVKVGLVDGELVINPDEEEREKSKLDLTVAGTRDAVLMVEAGANEVSEDVMLDAIELAHQEIKRLVLLQEEIGEEAGKKKFEFTKDEITPELDEEIRKYISSDMENALRIPEKLERNAKVDEIKENTLQYFEDMFENNGLDNEEKNKQLKMVERTIEKVMKEKVRKMIIEEGIRPDGRKPDEIRPIWCEVGTLPRVHGSGVFTRGQTQALSVVTLGATSDEQILFGLGEEETKRYMHHYNFPPYSVGETSPLRSPGRREIGHGALGERALQPVIPDQEEFPYTIRVVSEVLESNGSTSQASICGSTLALMDAGVPIKEPVAGIAMGLLKEDEKVVILSDIQGLEDFYGDMDFKVAGTRNGITALQMDIKIHGISKEILKKALKRAREGRLYILDKMLQVIDKPRPELSPYAPLMITMKVSPDKIRHIIGPGGKIINKIIDETGVEIDIDDDGSVYILAQDQESGNRAKEIINKLTKEVEVGDIYEGRVKKITNFGAFVEILPGREGLVHISELADHHVKKVEDIVKIGDRIPVKVIEIDELGRINLSRKRALKEQKKE.

Mg(2+)-binding residues include D492 and D498. A KH domain is found at 559–618 (PLMITMKVSPDKIRHIIGPGGKIINKIIDETGVEIDIDDDGSVYILAQDQESGNRAKEII). Positions 628–696 (GDIYEGRVKK…ELGRINLSRK (69 aa)) constitute an S1 motif domain.

This sequence belongs to the polyribonucleotide nucleotidyltransferase family. Requires Mg(2+) as cofactor.

Its subcellular location is the cytoplasm. It catalyses the reaction RNA(n+1) + phosphate = RNA(n) + a ribonucleoside 5'-diphosphate. Its function is as follows. Involved in mRNA degradation. Catalyzes the phosphorolysis of single-stranded polyribonucleotides processively in the 3'- to 5'-direction. This chain is Polyribonucleotide nucleotidyltransferase, found in Halothermothrix orenii (strain H 168 / OCM 544 / DSM 9562).